A 302-amino-acid chain; its full sequence is N-acetyl-D-glucosamine kinase (302 aa).

ATP contacts are provided by residues 4-11 and 133-140; these read GFDVGGTK and GFGGGLVY. Zn(2+)-binding residues include His157, Cys177, Cys179, and Cys184.

Belongs to the ROK (NagC/XylR) family. NagK subfamily.

It carries out the reaction N-acetyl-D-glucosamine + ATP = N-acetyl-D-glucosamine 6-phosphate + ADP + H(+). The protein operates within cell wall biogenesis; peptidoglycan recycling. Functionally, catalyzes the phosphorylation of N-acetyl-D-glucosamine (GlcNAc) derived from cell-wall degradation, yielding GlcNAc-6-P. The polypeptide is N-acetyl-D-glucosamine kinase (Vibrio atlanticus (strain LGP32) (Vibrio splendidus (strain Mel32))).